Reading from the N-terminus, the 250-residue chain is Glutathione transferase omega-1 (250 aa).

The GST N-terminal domain occupies 21 to 101; it reads SKGSFRVYNM…YLDDAFPETR (81 aa). C33 serves as the catalytic Nucleophile. Residues K60 and 85–86 each bind glutathione; that span reads ES. Positions 106–234 constitute a GST C-terminal domain; sequence DPYEKVQQKL…TQSLEHGAAF (129 aa).

Belongs to the GST superfamily. Omega family. In terms of assembly, homodimer. In terms of tissue distribution, expressed in the intestinal cells.

The protein resides in the cytoplasm. It catalyses the reaction RX + glutathione = an S-substituted glutathione + a halide anion + H(+). It carries out the reaction L-dehydroascorbate + 2 glutathione = glutathione disulfide + L-ascorbate. The enzyme catalyses methylarsonate + 2 glutathione + H(+) = methylarsonous acid + glutathione disulfide + H2O. Functionally, exhibits glutathione-dependent thiol transferase activity. Has dehydroascorbate reductase activity and may contribute to the recycling of ascorbic acid. Participates in the biotransformation of inorganic arsenic and reduces monomethylarsonic acid (MMA). Protects against environmental stress and oxidative stress. This chain is Glutathione transferase omega-1 (gsto-1), found in Caenorhabditis elegans.